The following is a 90-amino-acid chain: DNA-directed RNA polymerase subunit Rpo5 (90 aa).

Belongs to the archaeal Rpo5/eukaryotic RPB5 RNA polymerase subunit family. In terms of assembly, part of the RNA polymerase complex.

It localises to the cytoplasm. It catalyses the reaction RNA(n) + a ribonucleoside 5'-triphosphate = RNA(n+1) + diphosphate. DNA-dependent RNA polymerase (RNAP) catalyzes the transcription of DNA into RNA using the four ribonucleoside triphosphates as substrates. The chain is DNA-directed RNA polymerase subunit Rpo5 from Aeropyrum pernix (strain ATCC 700893 / DSM 11879 / JCM 9820 / NBRC 100138 / K1).